The primary structure comprises 439 residues: Tol-Pal system protein TolB (439 aa).

Positions 1–22 (MKKPLRWLAALTVLLLPLSALA) are cleaved as a signal peptide.

This sequence belongs to the TolB family. As to quaternary structure, the Tol-Pal system is composed of five core proteins: the inner membrane proteins TolA, TolQ and TolR, the periplasmic protein TolB and the outer membrane protein Pal. They form a network linking the inner and outer membranes and the peptidoglycan layer.

Its subcellular location is the periplasm. Part of the Tol-Pal system, which plays a role in outer membrane invagination during cell division and is important for maintaining outer membrane integrity. This chain is Tol-Pal system protein TolB, found in Xanthomonas oryzae pv. oryzae (strain PXO99A).